Reading from the N-terminus, the 668-residue chain is Protein-glutamine gamma-glutamyltransferase (668 aa).

Residues M1–R6 are Cytoplasmic-facing. Residues V7 to M27 traverse the membrane as a helical segment. At P28–A50 the chain is on the periplasmic side. Residues G51–L71 traverse the membrane as a helical segment. Over S72–G74 the chain is Cytoplasmic. The helical transmembrane segment at S75–V95 threads the bilayer. Over E96–A103 the chain is Periplasmic. 2 consecutive transmembrane segments (helical) span residues L104–F124 and L125–Q145. Topologically, residues Q146–R158 are cytoplasmic. Residues L159–P179 traverse the membrane as a helical segment. Residues R180–G548 lie on the Periplasmic side of the membrane. C404 (nucleophile) is an active-site residue. Residues H448 and D464 contribute to the active site. The helical transmembrane segment at L549 to P569 threads the bilayer. Over W570–A668 the chain is Cytoplasmic.

Belongs to the transglutaminase-like superfamily.

The protein localises to the cell inner membrane. The enzyme catalyses L-glutaminyl-[protein] + L-lysyl-[protein] = [protein]-L-lysyl-N(6)-5-L-glutamyl-[protein] + NH4(+). Functionally, displays transglutaminase activity (TGase) in vitro. Plays a critical role in the viability of P.aeruginosa. Might contribute to an essential function linked to the cell wall. The sequence is that of Protein-glutamine gamma-glutamyltransferase (tgpA) from Pseudomonas aeruginosa (strain ATCC 15692 / DSM 22644 / CIP 104116 / JCM 14847 / LMG 12228 / 1C / PRS 101 / PAO1).